The following is a 432-amino-acid chain: Glutamate-1-semialdehyde 2,1-aminomutase (432 aa).

Lysine 270 bears the N6-(pyridoxal phosphate)lysine mark.

It belongs to the class-III pyridoxal-phosphate-dependent aminotransferase family. HemL subfamily. In terms of assembly, homodimer. The cofactor is pyridoxal 5'-phosphate.

Its subcellular location is the cytoplasm. The enzyme catalyses (S)-4-amino-5-oxopentanoate = 5-aminolevulinate. It participates in porphyrin-containing compound metabolism; protoporphyrin-IX biosynthesis; 5-aminolevulinate from L-glutamyl-tRNA(Glu): step 2/2. The chain is Glutamate-1-semialdehyde 2,1-aminomutase from Acinetobacter baumannii (strain ACICU).